A 270-amino-acid chain; its full sequence is MAAPGEALTSSGYIAHHLSNLSLYKLGLVGSETSFWNVHIDSLFFSWFTGLIFLGIFYKVAKRTTAGVPGKLQCAVEMIVEFVADNVKDTFHGRNPLIAPLALTIFCWVFLMNVMDLVPIDFLPYPAEHWLGIPYLKVVPSADVNITMAMALGVFALMIYYSIKVKGLGGFAKELALHPFNHPLMIPFNLLIEVVSLLAKPLSLGMRLFGNMFAGEVVFILCAAMLPWYLQWMGSLPWAIFHILVITIQAFVFMMLTIVYLSMAHEDSDH.

The next 5 membrane-spanning stretches (helical) occupy residues 38–58 (VHID…GIFY), 98–118 (IAPL…MDLV), 143–163 (DVNI…YYSI), 208–228 (LFGN…MLPW), and 239–259 (AIFH…LTIV).

This sequence belongs to the ATPase A chain family. As to quaternary structure, F-type ATPases have 2 components, CF(1) - the catalytic core - and CF(0) - the membrane proton channel. CF(1) has five subunits: alpha(3), beta(3), gamma(1), delta(1), epsilon(1). CF(0) has three main subunits: a(1), b(2) and c(9-12). The alpha and beta chains form an alternating ring which encloses part of the gamma chain. CF(1) is attached to CF(0) by a central stalk formed by the gamma and epsilon chains, while a peripheral stalk is formed by the delta and b chains.

The protein localises to the cell inner membrane. Its function is as follows. Key component of the proton channel; it plays a direct role in the translocation of protons across the membrane. The sequence is that of ATP synthase subunit a from Vibrio parahaemolyticus serotype O3:K6 (strain RIMD 2210633).